Reading from the N-terminus, the 612-residue chain is Indole-3-acetic acid-amido synthetase GH3.6 (612 aa).

The protein belongs to the IAA-amido conjugating enzyme family. Expressed in cotyledons, stipules, true leaves, hypocotyls, and all parts of the roots. Not detected in flowers.

Its function is as follows. Catalyzes the synthesis of indole-3-acetic acid (IAA)-amino acid conjugates, providing a mechanism for the plant to cope with the presence of excess auxin. Strongly reactive with Glu, Gln, Trp, Asp, Ala, Leu, Phe, Gly, Tyr, Met, Ile and Val. Little or no product formation with His, Ser, Thr, Arg, Lys, or Cys. Also active on pyruvic and butyric acid analogs of IAA, PAA and the synthetic auxin naphthaleneacetic acid (NAA). The two chlorinated synthetic auxin herbicides 2,4-D and 3,6-dichloro-o-anisic acid (dicamba) cannot be used as substrates. Involved in auxin signal transduction. Inhibits shoot and hypocotyl cell elongation, and lateral root cell differentiation in light. The sequence is that of Indole-3-acetic acid-amido synthetase GH3.6 (GH3.6) from Arabidopsis thaliana (Mouse-ear cress).